Consider the following 76-residue polypeptide: Heat shock factor-binding protein 1 (76 aa).

This sequence belongs to the HSBP1 family. In terms of assembly, homohexamer. Associates with heptad repeats of HSF1 trimers and probably also HSF1 monomers, and with HSP70. Association with HSF1 trimers and HSP70 coincides with attenuation of heat shock response and the conversion of HSF1 trimer to monomer.

It localises to the nucleus. Functionally, negative regulator of the heat shock response. Negatively affects HSF1 DNA-binding activity. May have a role in the suppression of the activation of the stress response during the aging process. This is Heat shock factor-binding protein 1 (HSBP1) from Homo sapiens (Human).